The sequence spans 152 residues: Nucleoside diphosphate kinase A (152 aa).

ATP is bound by residues Lys-12, Phe-60, Arg-88, and Thr-94. A Glycyl lysine isopeptide (Lys-Gly) (interchain with G-Cter in ubiquitin) cross-link involves residue Lys-100. ATP contacts are provided by Arg-105 and Asn-115. The Pros-phosphohistidine intermediate role is filled by His-118. A phosphoserine mark is found at Ser-120, Ser-122, and Ser-125.

Belongs to the NDK family. As to quaternary structure, hexamer of two different chains: An and B (A6, A5B, A4B2, A3B3, A2B4, AB5, B6). Interacts with PRUNE1. Component of the SET complex, composed of at least ANP32A, APEX1, HMGB2, NME1, SET and TREX1. Within this complex, interacts directly with SET. Also interacts with TREX1, but only following translocation to the nucleus. Requires Mg(2+) as cofactor.

The protein resides in the cytoplasm. It localises to the nucleus. It carries out the reaction a 2'-deoxyribonucleoside 5'-diphosphate + ATP = a 2'-deoxyribonucleoside 5'-triphosphate + ADP. The enzyme catalyses a ribonucleoside 5'-diphosphate + ATP = a ribonucleoside 5'-triphosphate + ADP. With respect to regulation, autophosphorylation at His-118 increases serine/threonine protein kinase activity of the enzyme. Interaction with the SET complex inhibits exonuclease activity. Its function is as follows. Major role in the synthesis of nucleoside triphosphates other than ATP. The ATP gamma phosphate is transferred to the NDP beta phosphate via a ping-pong mechanism, using a phosphorylated active-site intermediate. Possesses nucleoside-diphosphate kinase, serine/threonine-specific protein kinase, geranyl and farnesyl pyrophosphate kinase, histidine protein kinase and 3'-5' exonuclease activities. Involved in cell proliferation, differentiation and development, signal transduction, G protein-coupled receptor endocytosis, and gene expression. Required for neural development including neural patterning and cell fate determination. During GZMA-mediated cell death, works in concert with TREX1. NME1 nicks one strand of DNA and TREX1 removes bases from the free 3' end to enhance DNA damage and prevent DNA end reannealing and rapid repair. This Canis lupus familiaris (Dog) protein is Nucleoside diphosphate kinase A (NME1).